A 35-amino-acid chain; its full sequence is Riboflavin-binding protein (35 aa).

A disulfide bond links Cys5 and Cys32.

Belongs to the folate receptor family.

Functionally, required for the transport of riboflavin to the developing oocyte. The sequence is that of Riboflavin-binding protein from Struthio camelus (Common ostrich).